Reading from the N-terminus, the 120-residue chain is Nitrogenase-stabilizing/protective protein NifW (120 aa).

This sequence belongs to the NifW family. As to quaternary structure, homotrimer; associates with NifD.

Functionally, may protect the nitrogenase Fe-Mo protein from oxidative damage. The chain is Nitrogenase-stabilizing/protective protein NifW from Rhodospirillum rubrum (strain ATCC 11170 / ATH 1.1.1 / DSM 467 / LMG 4362 / NCIMB 8255 / S1).